The primary structure comprises 716 residues: Phosphoribosylformylglycinamidine synthase subunit PurL (716 aa).

H33 is a catalytic residue. Y36 contacts ATP. A Mg(2+)-binding site is contributed by E77. Residues 78–81 (SHNH) and R100 each bind substrate. H79 (proton acceptor) is an active-site residue. Mg(2+) is bound at residue D101. A substrate-binding site is contributed by Q225. D253 serves as a coordination point for Mg(2+). Substrate is bound at residue 297–299 (ESQ). N475 and G512 together coordinate ATP. N513 lines the Mg(2+) pocket. S515 serves as a coordination point for substrate.

Belongs to the FGAMS family. Monomer. Part of the FGAM synthase complex composed of 1 PurL, 1 PurQ and 2 PurS subunits.

Its subcellular location is the cytoplasm. The catalysed reaction is N(2)-formyl-N(1)-(5-phospho-beta-D-ribosyl)glycinamide + L-glutamine + ATP + H2O = 2-formamido-N(1)-(5-O-phospho-beta-D-ribosyl)acetamidine + L-glutamate + ADP + phosphate + H(+). It functions in the pathway purine metabolism; IMP biosynthesis via de novo pathway; 5-amino-1-(5-phospho-D-ribosyl)imidazole from N(2)-formyl-N(1)-(5-phospho-D-ribosyl)glycinamide: step 1/2. Part of the phosphoribosylformylglycinamidine synthase complex involved in the purines biosynthetic pathway. Catalyzes the ATP-dependent conversion of formylglycinamide ribonucleotide (FGAR) and glutamine to yield formylglycinamidine ribonucleotide (FGAM) and glutamate. The FGAM synthase complex is composed of three subunits. PurQ produces an ammonia molecule by converting glutamine to glutamate. PurL transfers the ammonia molecule to FGAR to form FGAM in an ATP-dependent manner. PurS interacts with PurQ and PurL and is thought to assist in the transfer of the ammonia molecule from PurQ to PurL. The chain is Phosphoribosylformylglycinamidine synthase subunit PurL from Methanosarcina mazei (strain ATCC BAA-159 / DSM 3647 / Goe1 / Go1 / JCM 11833 / OCM 88) (Methanosarcina frisia).